Reading from the N-terminus, the 252-residue chain is Triosephosphate isomerase (252 aa).

Substrate is bound at residue 9-11; that stretch reads NWK. The active-site Electrophile is the H100. The active-site Proton acceptor is E171. Substrate-binding positions include G177, S216, and 237–238; that span reads GG.

It belongs to the triosephosphate isomerase family. In terms of assembly, homodimer.

The protein localises to the cytoplasm. The enzyme catalyses D-glyceraldehyde 3-phosphate = dihydroxyacetone phosphate. It participates in carbohydrate biosynthesis; gluconeogenesis. Its pathway is carbohydrate degradation; glycolysis; D-glyceraldehyde 3-phosphate from glycerone phosphate: step 1/1. In terms of biological role, involved in the gluconeogenesis. Catalyzes stereospecifically the conversion of dihydroxyacetone phosphate (DHAP) to D-glyceraldehyde-3-phosphate (G3P). The sequence is that of Triosephosphate isomerase from Polynucleobacter necessarius subsp. necessarius (strain STIR1).